We begin with the raw amino-acid sequence, 619 residues long: Probable ATP-dependent RNA helicase DDX59 (619 aa).

The segment at 1–101 (MFVPRSLKIK…KSFSKTQRWP (101 aa)) is disordered. Basic and acidic residues predominate over residues 12–27 (SSNDDLKSGEAKKSKP). A Glycyl lysine isopeptide (Lys-Gly) (interchain with G-Cter in SUMO2) cross-link involves residue lysine 26. The segment covering 59–76 (ASSTNSPSCQLAEVSSTG) has biased composition (polar residues). Position 64 is a phosphoserine (serine 64). The segment covering 79 to 91 (EGVKDSHPSEEPV) has biased composition (basic and acidic residues). The HIT-type zinc finger occupies 104–133 (GEPVCVVCGRYGEYICDKTDEDVCSLECKA). Serine 160 is modified (phosphoserine). The short motif at 203–231 (IDFEHCGFPETLNQNLKKSGYEVPTPIQM) is the Q motif element. Positions 234-405 (IPVGLLGRDI…DQLLHNPVRI (172 aa)) constitute a Helicase ATP-binding domain. 247–254 (ADTGSGKT) is an ATP binding site. Positions 353-356 (DEAD) match the DEAD box motif. The 164-residue stretch at 416 to 579 (SVRQIILWVE…ILPPQLLNSP (164 aa)) folds into the Helicase C-terminal domain. Residues 583–594 (EQKRKEQQKDRQ) show a composition bias toward basic and acidic residues. The disordered stretch occupies residues 583–603 (EQKRKEQQKDRQTQNSLVTGA).

The protein belongs to the DEAD box helicase family. DDX59 subfamily. As to quaternary structure, interacts (via HIT-type zinc finger) with the RUVBL1/RUVBL2 complex in the presence of ADP.

It is found in the cytoplasm. The protein localises to the nucleus. It catalyses the reaction ATP + H2O = ADP + phosphate + H(+). In Mus musculus (Mouse), this protein is Probable ATP-dependent RNA helicase DDX59 (Ddx59).